Reading from the N-terminus, the 460-residue chain is tRNA modification GTPase MnmE (460 aa).

(6S)-5-formyl-5,6,7,8-tetrahydrofolate-binding residues include Arg-29, Glu-91, and Lys-132. Residues Gly-227–Gly-383 form the TrmE-type G domain. Residue Asn-237 coordinates K(+). GTP is bound by residues Asn-237–Ser-242, Thr-256–Thr-262, and Asp-281–Gly-284. Residue Ser-241 participates in Mg(2+) binding. Thr-256, Ile-258, and Thr-261 together coordinate K(+). Thr-262 serves as a coordination point for Mg(2+). Lys-460 lines the (6S)-5-formyl-5,6,7,8-tetrahydrofolate pocket.

It belongs to the TRAFAC class TrmE-Era-EngA-EngB-Septin-like GTPase superfamily. TrmE GTPase family. As to quaternary structure, homodimer. Heterotetramer of two MnmE and two MnmG subunits. Requires K(+) as cofactor.

It localises to the cytoplasm. In terms of biological role, exhibits a very high intrinsic GTPase hydrolysis rate. Involved in the addition of a carboxymethylaminomethyl (cmnm) group at the wobble position (U34) of certain tRNAs, forming tRNA-cmnm(5)s(2)U34. The sequence is that of tRNA modification GTPase MnmE from Prochlorococcus marinus (strain MIT 9312).